The following is a 300-amino-acid chain: MAEFRSGFVCLIGRPNTGKSTLTNALVGTKVAITSMKPQTTRHTIRGIVHREGNFQIVLVDTPGLHRPRTLLGKRLNDLVRDTYTEVDLIGLCIPADEATGPGDRWIVNQIRSVAPKTILVVIVTKIDKVPKDRLSAQLVAVSDLVADSAEIVPVSAVTGEQVDVLIDVLAAALPPGPAYYSAGELTDEPEELLMAELIREAVLEGVHDELPHSLAVVIDEVSPRAGRGDLIDVHAVLYVERPSQKGIVIGKSGARLREVGIAARRQIEKLLGTNIYLDLHVNVAKNWQRNPKQLGRLGF.

The 172-residue stretch at 5-176 (RSGFVCLIGR…IDVLAAALPP (172 aa)) folds into the Era-type G domain. The tract at residues 13 to 20 (GRPNTGKS) is G1. 13 to 20 (GRPNTGKS) serves as a coordination point for GTP. The tract at residues 39–43 (QTTRH) is G2. A G3 region spans residues 61–64 (DTPG). Residues 61–65 (DTPGL) and 125–128 (TKID) contribute to the GTP site. Residues 125–128 (TKID) form a G4 region. The interval 155 to 157 (VSA) is G5. The KH type-2 domain maps to 207-286 (VHDELPHSLA…YLDLHVNVAK (80 aa)).

It belongs to the TRAFAC class TrmE-Era-EngA-EngB-Septin-like GTPase superfamily. Era GTPase family. As to quaternary structure, monomer.

It is found in the cell envelope. It localises to the secreted. Its subcellular location is the cell wall. Exhibits GTPase activity. Binds RNA but is probably not involved in ribosome assembly in mycobacteria. This Mycobacterium leprae (strain TN) protein is GTPase Era.